We begin with the raw amino-acid sequence, 275 residues long: Aliphatic sulfonates import ATP-binding protein SsuB 1 (275 aa).

Residues 34-260 (ISLTGLEKSF…RHGHPGLCEL (227 aa)) enclose the ABC transporter domain. 66–73 (GKSGCGKS) is a binding site for ATP.

This sequence belongs to the ABC transporter superfamily. Aliphatic sulfonates importer (TC 3.A.1.17.2) family. As to quaternary structure, the complex is composed of two ATP-binding proteins (SsuB), two transmembrane proteins (SsuC) and a solute-binding protein (SsuA).

It localises to the cell inner membrane. The enzyme catalyses ATP + H2O + aliphatic sulfonate-[sulfonate-binding protein]Side 1 = ADP + phosphate + aliphatic sulfonateSide 2 + [sulfonate-binding protein]Side 1.. In terms of biological role, part of the ABC transporter complex SsuABC involved in aliphatic sulfonates import. Responsible for energy coupling to the transport system. This Rhizobium johnstonii (strain DSM 114642 / LMG 32736 / 3841) (Rhizobium leguminosarum bv. viciae) protein is Aliphatic sulfonates import ATP-binding protein SsuB 1.